Here is a 493-residue protein sequence, read N- to C-terminus: Tripartite motif-containing protein 5 (493 aa).

Alanine 2 bears the N-acetylalanine mark. The RING-type zinc finger occupies cysteine 15–arginine 58. The residue at position 85 (serine 85) is a Phosphoserine. The segment at glutamine 90–methionine 131 adopts a B box-type zinc-finger fold. Residues cysteine 95, histidine 98, cysteine 117, and histidine 123 each coordinate Zn(2+). A coiled-coil region spans residues leucine 130–glutamine 240. Residues phenylalanine 185–asparagine 198 are required for interaction with GABARAP and for autophagy. The B30.2/SPRY domain occupies leucine 281–serine 493.

Belongs to the TRIM/RBCC family. Can form homodimers and homotrimers. In addition to lower-order dimerization, also exhibits a higher-order multimerization and both low- and high-order multimerizations are essential for its restriction activity. Interacts with BTBD1 and BTBD2. Interacts with PSMC4, PSMC5, PSMD7 and HSPA8/HSC70. Interacts (via B30.2/SPRY domain) with HSPA1A/B. Interacts with PSMC2, MAP3K7/TAK1, TAB2 and TAB3. Interacts with SQSTM1. Interacts with TRIM6 and TRIM34. Interacts with ULK1 (phosphorylated form), GABARAP, GABARAPL1, GABARAPL2, MAP1LC3A, MAP1LC3C and BECN1. Degraded in a proteasome-independent fashion in the absence of viral infection but in a proteasome-dependent fashion following exposure to restriction sensitive virus. Post-translationally, autoubiquitinated in a RING finger- and UBE2D2-dependent manner. Monoubiquitinated by TRIM21. Deubiquitinated by Yersinia YopJ. Ubiquitination may not lead to proteasomal degradation.

It localises to the cytoplasm. The protein resides in the nucleus. It catalyses the reaction S-ubiquitinyl-[E2 ubiquitin-conjugating enzyme]-L-cysteine + [acceptor protein]-L-lysine = [E2 ubiquitin-conjugating enzyme]-L-cysteine + N(6)-ubiquitinyl-[acceptor protein]-L-lysine.. Its pathway is protein modification; protein ubiquitination. In terms of biological role, capsid-specific restriction factor that prevents infection from non-host-adapted retroviruses. Blocks viral replication early in the life cycle, after viral entry but before reverse transcription. In addition to acting as a capsid-specific restriction factor, also acts as a pattern recognition receptor that activates innate immune signaling in response to the retroviral capsid lattice. Binding to the viral capsid triggers its E3 ubiquitin ligase activity, and in concert with the heterodimeric ubiquitin conjugating enzyme complex UBE2V1-UBE2N (also known as UBC13-UEV1A complex) generates 'Lys-63'-linked polyubiquitin chains, which in turn are catalysts in the autophosphorylation of the MAP3K7/TAK1 complex (includes TAK1, TAB2, and TAB3). Activation of the MAP3K7/TAK1 complex by autophosphorylation results in the induction and expression of NF-kappa-B and MAPK-responsive inflammatory genes, thereby leading to an innate immune response in the infected cell. Plays a role in regulating autophagy through activation of autophagy regulator BECN1 by causing its dissociation from its inhibitors BCL2 and TAB2. This is Tripartite motif-containing protein 5 (TRIM5) from Hylobates lar (Lar gibbon).